Reading from the N-terminus, the 360-residue chain is POU domain, class 5, transcription factor 1 (360 aa).

Disordered stretches follow at residues 1 to 48 (MAGH…SGIG) and 86 to 137 (PPGG…EESQ). A 9aaTAD motif is present at residues 4–12 (HLASDFAFS). Phosphoserine; by MAPK is present on Ser-111. Lys-123 is covalently cross-linked (Glycyl lysine isopeptide (Lys-Gly) (interchain with G-Cter in SUMO)). The span at 123 to 137 (KLDKEKLEPNPEESQ) shows a compositional bias: basic and acidic residues. The 75-residue stretch at 138 to 212 (DIKALQKDLE…LLQKWVEEAD (75 aa)) folds into the POU-specific domain. DNA is bound by residues Arg-157 and Gln-164. DNA-binding regions lie at residues 180–186 (SQTTICR) and 193–196 (SFKN). Positions 230–289 (RKRKRTSIENRVRGNLESMFLQCPKPTLQQISHIAQQLGLEKDVVRVWFCNRRQKGKRSS) form a DNA-binding region, homeobox. Thr-235 carries the post-translational modification Phosphothreonine. A phosphoserine mark is found at Ser-236, Ser-289, Ser-290, and Ser-355. The interval 287-322 (RSSSDYSQREDFEAAGSPFTGGPVSSPLAPGPHFGT) is disordered.

The protein belongs to the POU transcription factor family. Class-5 subfamily. As to quaternary structure, interacts with PKM. Interacts with WWP2. Interacts with UBE2I and ZSCAN10. Interacts with PCGF1. Interacts with ESRRB; recruits ESRRB near the POU5F1-SOX2 element in the NANOG proximal promoter; the interaction is DNA independent. Interacts with MAPK8 and MAPK9; the interaction allows MAPK8 and MAPK9 to phosphorylate POU5F1 on Ser-355. Interacts (when phosphorylated on Ser-355) with FBXW8. Interacts with FBXW4. Interacts with SOX2 and SOX15; binds synergistically with either SOX2 or SOX15 to DNA. Interacts with DDX56. Post-translationally, sumoylation enhances the protein stability, DNA binding and transactivation activity. Sumoylation is required for enhanced YES1 expression. In terms of processing, ubiquitinated; undergoes 'Lys-63'-linked polyubiquitination by WWP2 leading to proteasomal degradation. ERK1/2-mediated phosphorylation at Ser-111 promotes nuclear exclusion and proteasomal degradation. Phosphorylation at Thr-235 and Ser-236 decrease DNA-binding and alters ability to activate transcription. Expressed in immature oocytes.

The protein resides in the cytoplasm. The protein localises to the nucleus. Functionally, transcription factor that binds to the octamer motif (5'-ATTTGCAT-3'). Forms a trimeric complex with SOX2 or SOX15 on DNA and controls the expression of a number of genes involved in embryonic development such as YES1, FGF4, UTF1 and ZFP206. Critical for early embryogenesis and for embryonic stem cell pluripotency. This chain is POU domain, class 5, transcription factor 1 (POU5F1), found in Bos taurus (Bovine).